The following is a 126-amino-acid chain: Protein FMP49, mitochondrial (126 aa).

It is found in the mitochondrion. The polypeptide is Protein FMP49, mitochondrial (Saccharomyces cerevisiae (strain ATCC 204508 / S288c) (Baker's yeast)).